Reading from the N-terminus, the 210-residue chain is Large ribosomal subunit protein uL3 (210 aa).

A disordered region spans residues T136–G156.

This sequence belongs to the universal ribosomal protein uL3 family. As to quaternary structure, part of the 50S ribosomal subunit. Forms a cluster with proteins L14 and L19.

Its function is as follows. One of the primary rRNA binding proteins, it binds directly near the 3'-end of the 23S rRNA, where it nucleates assembly of the 50S subunit. This Solidesulfovibrio magneticus (strain ATCC 700980 / DSM 13731 / RS-1) (Desulfovibrio magneticus) protein is Large ribosomal subunit protein uL3.